We begin with the raw amino-acid sequence, 346 residues long: Probable alpha-1,2-galactosyltransferase gmh2 (346 aa).

Over Met1–Arg11 the chain is Cytoplasmic. The chain crosses the membrane as a helical; Signal-anchor for type II membrane protein span at residues Phe12–Tyr32. The Lumenal segment spans residues Phe33 to Asp346. Asn64, Asn142, and Asn224 each carry an N-linked (GlcNAc...) asparagine glycan.

It belongs to the glycosyltransferase 34 family.

It localises to the golgi apparatus membrane. This chain is Probable alpha-1,2-galactosyltransferase gmh2 (gmh2), found in Schizosaccharomyces pombe (strain 972 / ATCC 24843) (Fission yeast).